The primary structure comprises 100 residues: MARKSLIQREKKRQVLEQKYHSIRQSLEREISEVSSLDDKWEIHRKLQSSPRNSTPTRLHRRCFLTGRSRANYRDFGLSGHVLREMTHACLLPGMKKSSW.

This sequence belongs to the universal ribosomal protein uS14 family. Part of the 30S ribosomal subunit.

It is found in the plastid. Its subcellular location is the chloroplast. Binds 16S rRNA, required for the assembly of 30S particles. The protein is Small ribosomal subunit protein uS14c of Cycas taitungensis (Prince sago).